The chain runs to 125 residues: NADPH-dependent 7-cyano-7-deazaguanine reductase (125 aa).

The Thioimide intermediate role is filled by cysteine 41. The active-site Proton donor is aspartate 48. Substrate contacts are provided by residues 63–65 (IEL) and 82–83 (HE).

This sequence belongs to the GTP cyclohydrolase I family. QueF type 1 subfamily.

Its subcellular location is the cytoplasm. It carries out the reaction 7-aminomethyl-7-carbaguanine + 2 NADP(+) = 7-cyano-7-deazaguanine + 2 NADPH + 3 H(+). It functions in the pathway tRNA modification; tRNA-queuosine biosynthesis. Its function is as follows. Catalyzes the NADPH-dependent reduction of 7-cyano-7-deazaguanine (preQ0) to 7-aminomethyl-7-deazaguanine (preQ1). This chain is NADPH-dependent 7-cyano-7-deazaguanine reductase, found in Sulfurovum sp. (strain NBC37-1).